Reading from the N-terminus, the 465-residue chain is Fumarate hydratase class II (465 aa).

Residues 99–101 (SGT), arginine 127, 130–133 (HPND), 140–142 (STN), and threonine 188 each bind substrate. The Proton donor/acceptor role is filled by histidine 189. The active site involves serine 319. Substrate contacts are provided by residues serine 320 and 325-327 (KVN).

Belongs to the class-II fumarase/aspartase family. Fumarase subfamily. Homotetramer.

The protein localises to the cytoplasm. The catalysed reaction is (S)-malate = fumarate + H2O. It participates in carbohydrate metabolism; tricarboxylic acid cycle; (S)-malate from fumarate: step 1/1. Its function is as follows. Involved in the TCA cycle. Catalyzes the stereospecific interconversion of fumarate to L-malate. This is Fumarate hydratase class II from Parasynechococcus marenigrum (strain WH8102).